The following is a 294-amino-acid chain: MQITEKYLPFGNWQTYCRIVGEATDRAPLLLLHGGPGSSHNYFEVLDQVAEKSGRQVIMYDQLGCGNSSIPDDQAETAYTAQTWVKELENVREQLGLDQIHLLGQSWGGMLALIYLCDYQPKGVKSLILSSTLASAKLWSQELHRLIKYLPKGEQAAIKEAETTGNYDSPAYQAANAHFMDQHAINVTPDLPEPVLRKKKGGNLAYLTGWGPNEYTPIGNLHGYEYTDRLKDLDLPALITSGTDDLCTPLVAKSMYDHLPNARWELFAGCGHMPFVQENAKYQELLSDWLISQD.

The 251-residue stretch at 28 to 278 (PLLLLHGGPG…GCGHMPFVQE (251 aa)) folds into the AB hydrolase-1 domain. Residue S106 is the Nucleophile of the active site. D245 is an active-site residue. H272 functions as the Proton donor in the catalytic mechanism.

Belongs to the peptidase S33 family. In terms of assembly, homotrimer.

The protein resides in the cell envelope. It carries out the reaction Release of N-terminal proline from a peptide.. Its activity is regulated as follows. Inhibited by 3,4-DCI, but no significant effect on enzyme activity by pepstatin A, E-64, 1,10-phenanthroline or EDTA. Its function is as follows. Releases the N-terminal proline from various substrates. Cleaves Pro-betaNA (L-prolyl-beta-naphthylamide) effectively. This is Proline iminopeptidase (pip) from Lactobacillus delbrueckii subsp. lactis.